The chain runs to 184 residues: MATGPRYKVPMRRRREVRTDYHQRLRLLKSGKPRLVARVSNKHVRAQLVTPGPQGDETHAAATSADLDEYGWEAPTGNLPSAYLTGYLAGIRALAAGVEEAVLDIGLNTATPGNKVFAVQEGAIDAGLEIPHNDAVLADWDRNRGVHIAEYAEQLDEPLYSGDFDATNLPEHFDEVLGNLQEDE.

The protein belongs to the universal ribosomal protein uL18 family. In terms of assembly, part of the 50S ribosomal subunit. Contacts the 5S and 23S rRNAs.

This is one of the proteins that bind and probably mediate the attachment of the 5S RNA into the large ribosomal subunit, where it forms part of the central protuberance. The protein is Large ribosomal subunit protein uL18 of Haloferax mediterranei (strain ATCC 33500 / DSM 1411 / JCM 8866 / NBRC 14739 / NCIMB 2177 / R-4) (Halobacterium mediterranei).